A 781-amino-acid chain; its full sequence is MLPFRTYGETIDEYEVQHLLGKGGFACVYKAKCLRSHQNVAIKMIDKKLIQGSGLSNRVRQEVEIHSRLKHPSVLQLYTFFQDANYVYLILELADNGELHRYMNQQMKRPFTEQEAASILRQVVDGLLYLHSHNIMHRDISMSNLLLSKDMHVKIADFGLATQLKRPDERHMTMCGTPNYISPEVVSHQSHGLPADLWSVGCMLYTLLVGRPPFDTDAVQSTLNKVVQSDYTIPGHLSYEARDLIDKLLRKNPHERISLEQVLRHPFMVKAGGSTISYTTNGASDGYGQSIVSGDSGIVTFASNDSKNSHRLRSVEQQATPQMMPQIQEEYGYYQDHRQKYAPHAAYRQSSAETLDSTEMDWQRMGQNAQKANFLAHSTPAAPVPAPVIRKAGKHNTEHISVPPLNTLRLQPTRYKTKNAIMSIVANGEVVIEFIKSKSKMNEDRIIDICRISGDGRRIIIHQPDPGRGLPIQEQTSETHSSGTDNVYNYDNLPSKHWKKYVYAARFVGLVKSKTPKVTYFSALAKCHLMENMTDFEMNYYSGAKLTKSPSEGIKVFDIHGVQLLDQSSSEAKRLIEHSNECFAHCLSICNALELAQTGSNTCFPVTIGRRPVVEVLPSHRPEGLRDTTNFAYSTPKSQQGSINFSISTISSMRSGSDNIGSQLLAAQQNVPIKRLNVPGVGTATELSHGIVQVQFVDGSVISVIPEAQGGGITYTQSNGVSTHFPDHDDLPLSVRDRLSHLPQVQMKLRCAPLISSKKFDCNAMNAKSTASAPWYNRMLI.

In terms of domain architecture, Protein kinase spans 14-268; that stretch reads YEVQHLLGKG…LEQVLRHPFM (255 aa). ATP contacts are provided by residues 20–28 and K43; that span reads LGKGGFACV. D139 (proton acceptor) is an active-site residue. The Cryptic POLO box 1 (CPB1) domain maps to 397–514; it reads TEHISVPPLN…ARFVGLVKSK (118 aa). A disordered region spans residues 463–486; that stretch reads QPDPGRGLPIQEQTSETHSSGTDN. The segment covering 473 to 486 has biased composition (polar residues); the sequence is QEQTSETHSSGTDN. The region spanning 515–618 is the Cryptic POLO box 2 (CPB2) domain; it reads TPKVTYFSAL…GRRPVVEVLP (104 aa). Residues 672–751 form the POLO box domain; it reads PIKRLNVPGV…LPQVQMKLRC (80 aa).

This sequence belongs to the protein kinase superfamily. Ser/Thr protein kinase family. CDC5/Polo subfamily. Homodimer. In terms of processing, ubiquitinated by the SCF(Slimb) ubiquitin ligase complex; leading to its degradation by the proteasome during interphase and regulating centriole number and ensuring the block to centriole reduplication.

Its subcellular location is the cytoplasm. It localises to the cytoskeleton. It is found in the microtubule organizing center. The protein resides in the centrosome. The protein localises to the centriole. It catalyses the reaction L-seryl-[protein] + ATP = O-phospho-L-seryl-[protein] + ADP + H(+). The enzyme catalyses L-threonyl-[protein] + ATP = O-phospho-L-threonyl-[protein] + ADP + H(+). In terms of biological role, serine/threonine-protein kinase that plays a central role in centriole duplication. Able to trigger procentriole formation on the surface of the mother centriole cylinder, using mother centriole as a platform, leading to the recruitment of centriole biogenesis proteins such as sas-6. When overexpressed, it is able to induce centrosome amplification through the simultaneous generation of multiple procentrioles adjoining each parental centriole during S phase. Centrosome amplification following overexpression can initiate tumorigenesis, highlighting the importance of centrosome regulation in cancers. In Drosophila virilis (Fruit fly), this protein is Serine/threonine-protein kinase PLK4 (SAK).